The sequence spans 82 residues: Chaperone protein DnaJ 1 (82 aa).

The tract at residues 1–33 (YHLGGPPVTLKLPPGTPAGRTMRARGKGAVRKD) is disordered.

The protein belongs to the DnaJ family. As to quaternary structure, homodimer. The cofactor is Zn(2+).

The protein localises to the cytoplasm. Functionally, participates actively in the response to hyperosmotic and heat shock by preventing the aggregation of stress-denatured proteins and by disaggregating proteins, also in an autonomous, DnaK-independent fashion. Unfolded proteins bind initially to DnaJ; upon interaction with the DnaJ-bound protein, DnaK hydrolyzes its bound ATP, resulting in the formation of a stable complex. GrpE releases ADP from DnaK; ATP binding to DnaK triggers the release of the substrate protein, thus completing the reaction cycle. Several rounds of ATP-dependent interactions between DnaJ, DnaK and GrpE are required for fully efficient folding. Also involved, together with DnaK and GrpE, in the DNA replication of plasmids through activation of initiation proteins. In Streptomyces albus G, this protein is Chaperone protein DnaJ 1 (dnaJ1).